Reading from the N-terminus, the 334-residue chain is DNA-directed RNA polymerase subunit alpha (334 aa).

The interval M1–A232 is alpha N-terminal domain (alpha-NTD). An alpha C-terminal domain (alpha-CTD) region spans residues G268 to C334.

It belongs to the RNA polymerase alpha chain family. In plastids the minimal PEP RNA polymerase catalytic core is composed of four subunits: alpha, beta, beta', and beta''. When a (nuclear-encoded) sigma factor is associated with the core the holoenzyme is formed, which can initiate transcription.

It is found in the plastid. The protein localises to the chloroplast. It carries out the reaction RNA(n) + a ribonucleoside 5'-triphosphate = RNA(n+1) + diphosphate. In terms of biological role, DNA-dependent RNA polymerase catalyzes the transcription of DNA into RNA using the four ribonucleoside triphosphates as substrates. The chain is DNA-directed RNA polymerase subunit alpha from Chloranthus spicatus (Chulantree).